Reading from the N-terminus, the 75-residue chain is Bacteriocin lactacin-F subunit LafA (75 aa).

Residues Met-1–Gly-18 constitute a propeptide that is removed on maturation.

Belongs to the bacteriocin class IIB family. As to quaternary structure, this bacteriocin depends upon the complementation of two peptides for activity: LafA and LafX. Associated with a 180 kDa bacteriocin complex.

Functionally, heat stable bacteriocin active against Enterococcus faecalis and other Lactobacilli. The protein is Bacteriocin lactacin-F subunit LafA (lafA) of Lactobacillus johnsonii (strain CNCM I-12250 / La1 / NCC 533).